Here is a 615-residue protein sequence, read N- to C-terminus: Albumin (615 aa).

An N-terminal signal peptide occupies residues 1 to 18 (MKWVTLISFIFLFSSATS). A propeptide spanning residues 19–23 (RNLQR) is cleaved from the precursor. Albumin domains are found at residues 22-214 (QRFA…IVMR), 215-407 (EKAK…QLNQ), and 408-605 (HIKE…NLIV). Residue His-30 participates in Cu cation binding. Residues Glu-33 and Asp-40 each coordinate Ca(2+). Intrachain disulfides connect Cys-80–Cys-89, Cys-102–Cys-118, Cys-117–Cys-128, Cys-152–Cys-197, Cys-196–Cys-205, Cys-228–Cys-274, and Cys-273–Cys-281. Ca(2+) contacts are provided by Glu-272, Asp-277, Glu-280, and Asp-283. Asp-277 contacts Zn(2+). 10 cysteine pairs are disulfide-bonded: Cys-293-Cys-307, Cys-306-Cys-317, Cys-344-Cys-389, Cys-388-Cys-397, Cys-420-Cys-466, Cys-465-Cys-476, Cys-489-Cys-505, Cys-504-Cys-515, Cys-542-Cys-587, and Cys-586-Cys-595. Residue Asn-500 is glycosylated (N-linked (GlcNAc...) asparagine).

It belongs to the ALB/AFP/VDB family. Plasma.

It is found in the secreted. In terms of biological role, binds water, Ca(2+), Na(+), K(+), fatty acids, hormones, bilirubin and drugs. Its main function is the regulation of the colloidal osmotic pressure of blood. The polypeptide is Albumin (ALB) (Gallus gallus (Chicken)).